A 185-amino-acid chain; its full sequence is MTVSIYSLFVIAVALALDAFGVSLSIGLSKNLRYKNKALFCISFGFFQFMLAYIGSYLGVLFNKYILVIPNIIGGIVIFVVGILMLKDGMKKDNKHMNIHKKMYFILGISVSIDAAIVGFTVLNSITSKLLLLESTIFIGIITSILCLIAFLISGYLKRINTISKYANYIGGVILMLFGLEMIFM.

The next 6 membrane-spanning stretches (helical) occupy residues 8–28, 42–62, 66–86, 103–123, 137–157, and 165–185; these read LFVI…SIGL, ISFG…GVLF, ILVI…ILML, MYFI…FTVL, IFIG…SGYL, and KYAN…MIFM.

It belongs to the MntP (TC 9.B.29) family.

Its subcellular location is the cell membrane. Probably functions as a manganese efflux pump. The sequence is that of Putative manganese efflux pump MntP from Clostridium novyi (strain NT).